The following is a 209-amino-acid chain: MKKSTKKESTHSKEESQTQAGNSEARKSGPSTKKAGEKTAEPEKATAGSGTEKSPEAACREENELLKDQLFRLAADFDNFKKRTARQMEENRKAVLEQVLLDFVEVTDNFERALKSAQTAEDMGSIVSGIEQLSKQFFSILQKYGLERIKCEKAGEFDPHRHEAVQHIETSEVPDNTIVDVYKPGYSLNEKVIRPALVSVARNPDETEK.

Composition is skewed to basic and acidic residues over residues 1 to 16 (MKKS…KEES) and 34 to 44 (KAGEKTAEPEK). The interval 1-61 (MKKSTKKEST…EKSPEAACRE (61 aa)) is disordered.

This sequence belongs to the GrpE family. In terms of assembly, homodimer.

It localises to the cytoplasm. Functionally, participates actively in the response to hyperosmotic and heat shock by preventing the aggregation of stress-denatured proteins, in association with DnaK and GrpE. It is the nucleotide exchange factor for DnaK and may function as a thermosensor. Unfolded proteins bind initially to DnaJ; upon interaction with the DnaJ-bound protein, DnaK hydrolyzes its bound ATP, resulting in the formation of a stable complex. GrpE releases ADP from DnaK; ATP binding to DnaK triggers the release of the substrate protein, thus completing the reaction cycle. Several rounds of ATP-dependent interactions between DnaJ, DnaK and GrpE are required for fully efficient folding. The protein is Protein GrpE of Methanosarcina acetivorans (strain ATCC 35395 / DSM 2834 / JCM 12185 / C2A).